The chain runs to 429 residues: Probable M18 family aminopeptidase 2 (429 aa).

Zn(2+) contacts are provided by H82, H156, and H401.

The protein belongs to the peptidase M18 family. The cofactor is Zn(2+).

This is Probable M18 family aminopeptidase 2 from Stutzerimonas stutzeri (strain A1501) (Pseudomonas stutzeri).